The following is a 37-amino-acid chain: Cytochrome b6-f complex subunit 5 (37 aa).

Residues 5–25 (LLSGIVLGLIPITLAGLFVTA) traverse the membrane as a helical segment.

It belongs to the PetG family. In terms of assembly, the 4 large subunits of the cytochrome b6-f complex are cytochrome b6, subunit IV (17 kDa polypeptide, PetD), cytochrome f and the Rieske protein, while the 4 small subunits are PetG, PetL, PetM and PetN. The complex functions as a dimer.

It is found in the plastid. The protein resides in the chloroplast thylakoid membrane. In terms of biological role, component of the cytochrome b6-f complex, which mediates electron transfer between photosystem II (PSII) and photosystem I (PSI), cyclic electron flow around PSI, and state transitions. PetG is required for either the stability or assembly of the cytochrome b6-f complex. The sequence is that of Cytochrome b6-f complex subunit 5 from Cryptomeria japonica (Japanese cedar).